A 60-amino-acid polypeptide reads, in one-letter code: uncharacterized protein (60 aa).

The protein localises to the host cytoplasm. This is an uncharacterized protein from Escherichia phage Mu (Bacteriophage Mu).